A 314-amino-acid polypeptide reads, in one-letter code: Putative S-adenosyl-L-methionine-dependent methyltransferase MAP_0256 (314 aa).

S-adenosyl-L-methionine contacts are provided by residues D132 and 161 to 162 (DL).

Belongs to the UPF0677 family.

In terms of biological role, exhibits S-adenosyl-L-methionine-dependent methyltransferase activity. The sequence is that of Putative S-adenosyl-L-methionine-dependent methyltransferase MAP_0256 from Mycolicibacterium paratuberculosis (strain ATCC BAA-968 / K-10) (Mycobacterium paratuberculosis).